The chain runs to 506 residues: AAA-ATPase At4g25835 (506 aa).

A signal peptide spans 1–20 (MKEYWTSLASLLGVLAFCQS). Residue 244 to 251 (GPPGTGKS) participates in ATP binding. The interval 462–506 (GKSRVQNVSLEEQENRAFDSLYAEENGGEEEEIEDNICKSSDDCS) is disordered. Over residues 487 to 496 (NGGEEEEIED) the composition is skewed to acidic residues. Basic and acidic residues predominate over residues 497–506 (NICKSSDDCS).

Belongs to the AAA ATPase family. BCS1 subfamily. Mg(2+) is required as a cofactor.

The enzyme catalyses ATP + H2O = ADP + phosphate + H(+). The chain is AAA-ATPase At4g25835 from Arabidopsis thaliana (Mouse-ear cress).